The following is a 613-amino-acid chain: pH-response transcription factor pacC/RIM101 (613 aa).

Residues 1–61 (MSPSAPEQKP…SSTAPSTSSD (61 aa)) form a disordered region. Residues 11–60 (QLQQQQQQQQQGSSSGDSSSGSVNDSKSVTPAPSATSSTSQSSTAPSTSS) are compositionally biased toward low complexity. C2H2-type zinc fingers lie at residues 64–89 (LICR…CERH), 100–124 (LTCQ…IRVH), and 130–152 (HKCE…VKTH). Over residues 146–157 (KKHVKTHADDSV) the composition is skewed to basic and acidic residues. 4 disordered regions span residues 146–186 (KKHV…YDHT), 371–391 (NTPS…GADG), 406–535 (AISS…ATRE), and 565–613 (EFVE…MPGA). Residues 417 to 441 (PPSSSMSYTSGHSPSPSSSAMSPQS) are compositionally biased toward low complexity. Polar residues-rich tracts occupy residues 442–460 (RHGS…SLPA) and 506–517 (SGASTPKASESA). The YPX[LI] motif 1 signature appears at 451–454 (YPTL). The YPX[LI] motif 2 signature appears at 605–608 (YPIL).

The protein belongs to the pacC/RIM101 family. Binds to DNA. In terms of processing, activated by C-terminal proteolytic cleavage by signaling protease (probably palB/RIM13) at neutral to alkaline ambient pH.

Its subcellular location is the cytoplasm. It is found in the nucleus. Functionally, transcription factor that mediates regulation of both acid- and alkaline-expressed genes in response to ambient pH. At alkaline ambient pH, activates transcription of alkaline-expressed genes (including PAC1 itself) and represses transcription of acid-expressed genes. In Gibberella moniliformis (Maize ear and stalk rot fungus), this protein is pH-response transcription factor pacC/RIM101 (PAC1).